The chain runs to 273 residues: Putative pyruvate, phosphate dikinase regulatory protein (273 aa).

149–156 (GPSRTSKT) lines the ADP pocket.

It belongs to the pyruvate, phosphate/water dikinase regulatory protein family. PDRP subfamily.

It catalyses the reaction N(tele)-phospho-L-histidyl/L-threonyl-[pyruvate, phosphate dikinase] + ADP = N(tele)-phospho-L-histidyl/O-phospho-L-threonyl-[pyruvate, phosphate dikinase] + AMP + H(+). The enzyme catalyses N(tele)-phospho-L-histidyl/O-phospho-L-threonyl-[pyruvate, phosphate dikinase] + phosphate + H(+) = N(tele)-phospho-L-histidyl/L-threonyl-[pyruvate, phosphate dikinase] + diphosphate. In terms of biological role, bifunctional serine/threonine kinase and phosphorylase involved in the regulation of the pyruvate, phosphate dikinase (PPDK) by catalyzing its phosphorylation/dephosphorylation. This is Putative pyruvate, phosphate dikinase regulatory protein from Rickettsia bellii (strain OSU 85-389).